A 632-amino-acid polypeptide reads, in one-letter code: Phosphomethylpyrimidine synthase (632 aa).

Residues N237, M266, Y295, H331, 351–353 (SRG), 392–395 (DGLR), and E431 each bind substrate. A Zn(2+)-binding site is contributed by H435. Residue Y458 coordinates substrate. H499 serves as a coordination point for Zn(2+). Positions 579, 582, and 587 each coordinate [4Fe-4S] cluster.

Belongs to the ThiC family. In terms of assembly, homodimer. [4Fe-4S] cluster is required as a cofactor.

The enzyme catalyses 5-amino-1-(5-phospho-beta-D-ribosyl)imidazole + S-adenosyl-L-methionine = 4-amino-2-methyl-5-(phosphooxymethyl)pyrimidine + CO + 5'-deoxyadenosine + formate + L-methionine + 3 H(+). It participates in cofactor biosynthesis; thiamine diphosphate biosynthesis. Functionally, catalyzes the synthesis of the hydroxymethylpyrimidine phosphate (HMP-P) moiety of thiamine from aminoimidazole ribotide (AIR) in a radical S-adenosyl-L-methionine (SAM)-dependent reaction. This is Phosphomethylpyrimidine synthase from Nitrosomonas eutropha (strain DSM 101675 / C91 / Nm57).